We begin with the raw amino-acid sequence, 371 residues long: tRNA-specific 2-thiouridylase MnmA (371 aa).

Residues alanine 24–serine 31 and leucine 50 contribute to the ATP site. Catalysis depends on cysteine 120, which acts as the Nucleophile. Cysteine 120 and cysteine 216 form a disulfide bridge. Glycine 144 is a binding site for ATP. The interaction with tRNA stretch occupies residues lysine 166–glutamine 168. Residue cysteine 216 is the Cysteine persulfide intermediate of the active site.

This sequence belongs to the MnmA/TRMU family.

Its subcellular location is the cytoplasm. The enzyme catalyses S-sulfanyl-L-cysteinyl-[protein] + uridine(34) in tRNA + AH2 + ATP = 2-thiouridine(34) in tRNA + L-cysteinyl-[protein] + A + AMP + diphosphate + H(+). Functionally, catalyzes the 2-thiolation of uridine at the wobble position (U34) of tRNA, leading to the formation of s(2)U34. This Wolbachia sp. subsp. Brugia malayi (strain TRS) protein is tRNA-specific 2-thiouridylase MnmA.